The sequence spans 76 residues: 8.4 kDa cro protein (76 aa).

This Escherichia coli (Bacteriophage HK022) protein is 8.4 kDa cro protein (cro-HTT).